We begin with the raw amino-acid sequence, 740 residues long: MPSSSFTTGLALGAGALVGANAFVAPTAKTTNLRAPTQEASLQVAASQQTEQPAPSTSALPWAFGAGACLALAAGGQRKQRSAIAQGRATVLPTASPVVRRALDQSSRYADLSLSEEQLIANGKHVLVSYIMKPKAGYDYLATAAHFAAESSTGTNVNVCTTDDFTKSVDALVYYIDPENEECKIAYPNLLFDRNIIDGRAMMCSVLTLTIGNNQGMGDVEYGKIYDIYFPPSYLRLFDGPSCNIIDMWRILGRGTTDGGLVVGTIIKPKLGLQPKPFGEACYAFWQGGDFIKNDEPQGNQPFCQMNEVIPEVVKAMRAAIKETGVAKLFSANITADDPAEMIARGKYVLAQFGPLSENCAFLVDGYVAGGTAVTVARRNFPKQFLHYHRAGHGSVTSPQTQRGYTAFVHTKLSRVQGASGIHVGTMSFGKMEGDASDKNIAFMLQDDAADGPYYHQTWEGMAETTPIISGGMNALRLPAFFENLGHSNVILTAGGGAFGHKDGPKQGATSCRQGEEAWKLWKAGVYGSVSLSDGVIEYAKTHEEIKGAFLTFQKDADQIYPGWKEKLGYTGESSVQAASFDWKKKAAAAAFAGSSTQARTVGVQMRHGYDDVATNTFYYDKRLESFGQQEFFNQVGYLPDGTPMNTAGNLTNHPETIGPDPHINGSELPQAVFVNSIGYLPDGTAMNQAGNAVNHPETMGPDLHMAGSPLPPPLKGYLNDIGYLSDGTPMATAGNLSNH.

A chloroplast-targeting transit peptide spans 1 to 55 (MPSSSFTTGLALGAGALVGANAFVAPTAKTTNLRAPTQEASLQVAASQQTEQPAP). Residues 56–76 (STSALPWAFGAGACLALAAGG) form a helical membrane-spanning segment. Asparagine 213 is a substrate binding site. Residue lysine 268 is the Proton acceptor of the active site. Lysine 270 is a substrate binding site. 3 residues coordinate Mg(2+): lysine 293, aspartate 295, and glutamate 296. Lysine 293 is modified (N6-carboxylysine). Residue histidine 389 is the Proton acceptor of the active site. Substrate is bound by residues arginine 390, histidine 423, and serine 470.

The protein belongs to the RuBisCO large chain family. Type II subfamily. Homodimer. Requires Mg(2+) as cofactor.

Its subcellular location is the plastid. The protein resides in the chloroplast membrane. The catalysed reaction is 2 (2R)-3-phosphoglycerate + 2 H(+) = D-ribulose 1,5-bisphosphate + CO2 + H2O. It catalyses the reaction D-ribulose 1,5-bisphosphate + O2 = 2-phosphoglycolate + (2R)-3-phosphoglycerate + 2 H(+). Functionally, ruBisCO catalyzes two reactions: the carboxylation of D-ribulose 1,5-bisphosphate, the primary event in carbon dioxide fixation, as well as the oxidative fragmentation of the pentose substrate. Both reactions occur simultaneously and in competition at the same active site. This chain is Ribulose bisphosphate carboxylase, chloroplastic (rbcL), found in Heterocapsa triquetra (Dinoflagellate).